We begin with the raw amino-acid sequence, 168 residues long: Vitelline membrane protein Vm26Ab (168 aa).

An N-terminal signal peptide occupies residues 1 to 23; the sequence is MAFNFGHLLIAGLVALSAVSSET. Positions 24 to 42 are cleaved as a propeptide — removed between stage 11 and 14 of oogenesis; that stretch reads IQLQPTQGILIPAPLAENI. The essential for N-terminal propeptide removal. Potential serine protease cleavage site stretch occupies residues 43-46; sequence RVSR. Residues 52 to 119 form an 8 X 8 AA approximate repeats of P-[AS]-Y-S-A-P-A-[AS] region; that stretch reads YGAAPAAPSY…PAYSAPASIP (68 aa). One copy of the 1; half-length repeat lies at 55–58; sequence APAA. Repeat 2 spans residues 59-66; that stretch reads PSYSAPAA. The 3; approximate repeat unit spans residues 70-77; it reads QAYSAPAA. 5 repeat units span residues 78-85, 86-93, 94-101, 102-109, and 110-117. Positions 117–154 constitute a VM domain; sequence SIPSPPCPKNYLFSCQPSLQPVPCSAPAQSYGSAGAYS. A propeptide spans 155-168 (removed between stage 9 and 12 of oogenesis); it reads QYVPQYAVPFVREL.

This sequence belongs to the vitelline membrane protein family. As to quaternary structure, interacts with vml and Vm26Aa; forms part of a disulfide-linked network within the vitelline membrane of stage 10 egg chambers. Proteolytically processed after secretion into the perivitelline space. Undergoes several proteolytic processing steps during formation of the vitelline membrane; an initial processing step removing a C-terminal propeptide occurs between stage 9 and 12 of oogenesis while a second removing a N-terminal propeptide occurs between stage 11 and 14. In terms of processing, becomes part of a disulfide-linked network including other vitelline membrane proteins, including vml and Vm26Aa, during vitelline membrane biogenesis and maturation. Cys-123, Cys-131 and Cys-140 are involved in disulfide network formation, with Cys-131 being the most important. Undergoes both disulfide and non-disulfide cross-linking upon incorporation into the vitelline membrane. In terms of tissue distribution, follicle cells.

It is found in the secreted. The protein resides in the extracellular space. The protein localises to the extracellular matrix. Its function is as follows. Major early eggshell protein secreted by follicle cells into the perivitelline space and incorporated into the vitelline membrane. Involved in vitelline membrane biogenesis; forms a cross-linked network with other vitelline membrane components. The chain is Vitelline membrane protein Vm26Ab from Drosophila melanogaster (Fruit fly).